Here is a 270-residue protein sequence, read N- to C-terminus: Hydroxyethylthiazole kinase (270 aa).

Residue Met-44 coordinates substrate. Arg-119 and Thr-165 together coordinate ATP. Gly-192 provides a ligand contact to substrate.

It belongs to the Thz kinase family. Mg(2+) serves as cofactor.

It catalyses the reaction 5-(2-hydroxyethyl)-4-methylthiazole + ATP = 4-methyl-5-(2-phosphooxyethyl)-thiazole + ADP + H(+). The protein operates within cofactor biosynthesis; thiamine diphosphate biosynthesis; 4-methyl-5-(2-phosphoethyl)-thiazole from 5-(2-hydroxyethyl)-4-methylthiazole: step 1/1. In terms of biological role, catalyzes the phosphorylation of the hydroxyl group of 4-methyl-5-beta-hydroxyethylthiazole (THZ). The polypeptide is Hydroxyethylthiazole kinase (Corynebacterium efficiens (strain DSM 44549 / YS-314 / AJ 12310 / JCM 11189 / NBRC 100395)).